The following is a 777-amino-acid chain: Zinc finger FYVE domain-containing protein 1 (777 aa).

Positions 416 to 777 (MAHSSFFPDE…FNCNKKPGDL (362 aa)) are required for localization in the lipid droplets. 2 FYVE-type zinc fingers span residues 598 to 659 (NSQI…DARN) and 715 to 775 (DHEI…KKPG). Residues C604, C607, C620, C623, C628, C631, C651, C654, C721, C724, C737, C740, C745, C748, C767, and C770 each contribute to the Zn(2+) site.

Interacts with RAB18 (in GTP-bound form). Interacts with BSCL2 in a RAB18-dependent manner. Interacts with ZW10. As to expression, ubiquitous.

The protein localises to the golgi apparatus. It localises to the golgi stack. Its subcellular location is the endoplasmic reticulum. It is found in the preautophagosomal structure. The protein resides in the lipid droplet. The protein localises to the mitochondrion. Functionally, plays a role in the formation of lipid droplets (LDs) which are storage organelles at the center of lipid and energy homeostasis. Regulates the morphology, size and distribution of LDs. Mediates the formation of endoplasmic reticulum-lipid droplets (ER-LD) contact sites by forming a complex with RAB18 and ZW10. Binds to phosphatidylinositol 3-phosphate (PtdIns3P) through FYVE-type zinc finger. The protein is Zinc finger FYVE domain-containing protein 1 (Zfyve1) of Mus musculus (Mouse).